Consider the following 105-residue polypeptide: Guanyl-specific ribonuclease U1 (105 aa).

A Pyrrolidone carboxylic acid modification is found at Gln-1. 2 disulfide bridges follow: Cys-8-Cys-103 and Cys-51-Cys-87. The active site involves His-37. The Proton acceptor role is filled by Glu-57. Residue His-92 is the Proton donor of the active site.

It belongs to the ribonuclease N1/T1 family.

The catalysed reaction is [RNA] containing guanosine + H2O = an [RNA fragment]-3'-guanosine-3'-phosphate + a 5'-hydroxy-ribonucleotide-3'-[RNA fragment].. This Ustilago sphaerogena (Smut fungus) protein is Guanyl-specific ribonuclease U1.